The sequence spans 238 residues: Large ribosomal subunit protein uL2 (238 aa).

The tract at residues 199 to 238 (PHGGGLHQSVSRPSTVSRNAPPGRKVGHIAARRTGRKEGA) is disordered. Positions 206 to 216 (QSVSRPSTVSR) are enriched in polar residues. Residues 223-238 (KVGHIAARRTGRKEGA) are compositionally biased toward basic residues.

The protein belongs to the universal ribosomal protein uL2 family. In terms of assembly, part of the 50S ribosomal subunit. Forms a bridge to the 30S subunit in the 70S ribosome.

In terms of biological role, one of the primary rRNA binding proteins. Required for association of the 30S and 50S subunits to form the 70S ribosome, for tRNA binding and peptide bond formation. It has been suggested to have peptidyltransferase activity; this is somewhat controversial. Makes several contacts with the 16S rRNA in the 70S ribosome. This chain is Large ribosomal subunit protein uL2, found in Sulfurisphaera tokodaii (strain DSM 16993 / JCM 10545 / NBRC 100140 / 7) (Sulfolobus tokodaii).